A 557-amino-acid chain; its full sequence is Dicarboxylate transporter 1, chloroplastic (557 aa).

Residues 1–69 constitute a chloroplast transit peptide; sequence MASLALSGSC…STLVKASSTV (69 aa). The next 12 helical transmembrane spans lie at 90–110, 122–142, 158–178, 229–249, 256–276, 305–325, 355–375, 376–396, 411–431, 438–458, 477–497, and 531–551; these read AAIKPLLASIATGLILWFVPV, LAIFLATIVGIITQPLPLGAV, FAAAFSAFGDPIPWLIALAFF, AGGIFLPLVKSLCVACGSNVG, LGSWLMLTCFQTSVISSSMFL, AAIVPGLVSLIVVPFLLYLIY, IMAATLFLTVGLWIFGAKLGV, DAVTAAILGLSVLLVTGVVTW, WFAALIAMAGYLNKYGLIEWF, FVGGLGLSWQLSFGILVLLYF, AFLSVSTALGTPPYFAALVLA, and YGFLISIVNILIWLGVGGAWW.

Belongs to the SLC13A/DASS transporter (TC 2.A.47) family. DIT1 subfamily. As to expression, expressed in roots, rosette and cauline leaves, stems, flowers and siliques.

Its subcellular location is the plastid. The protein localises to the chloroplast inner membrane. Functionally, 2-oxoglutarate/malate translocator involved with DIT2-1 in primary ammonia assimilation and in the re-assimilation of ammonia generated by the photorespiratory pathway. Imports 2-oxoglutarate into plastids as precursor for ammonia assimilation. 2-oxoglutarate is converted to glutamate, the end product of ammonia assimilation, which is exported to the cytosol by DIT2-1. This Arabidopsis thaliana (Mouse-ear cress) protein is Dicarboxylate transporter 1, chloroplastic (DIT1).